The sequence spans 500 residues: Mannan polymerase II complex ANP1 subunit (500 aa).

Residues 1-15 lie on the Cytoplasmic side of the membrane; it reads MKYNNRKLSFNPTTV. A helical; Signal-anchor for type II membrane protein transmembrane segment spans residues 16–27; the sequence is SIAGTLLTVFFL. Residues 28 to 500 are Lumenal-facing; it reads TRLVLSFFSI…VPLDFDPDRN (473 aa). A disordered region spans residues 424–500; sequence WSEEGDGSEL…VPLDFDPDRN (77 aa). Residues 446–467 show a composition bias toward low complexity; it reads QQQQQQQQQQQQQQQQQQQQQQ. Positions 489–500 are enriched in basic and acidic residues; that stretch reads KEVPLDFDPDRN.

The protein belongs to the ANP1/MMN9/VAN1 family. As to quaternary structure, component of the M-Pol II complex composed of ANP1, MNN9, MNN10, MNN11 and HOC1.

The protein localises to the endoplasmic reticulum membrane. It is found in the golgi apparatus membrane. Involved in the organization of the secretory pathway. Required to maintain a functional Golgi apparatus. Functionally, the M-Pol II complex possesses alpha-1,6-mannosyltransferase activity and is probably involved in the elongation of the mannan backbone of N-linked glycans on cell wall and periplasmic proteins. This is Mannan polymerase II complex ANP1 subunit (ANP1) from Saccharomyces cerevisiae (strain ATCC 204508 / S288c) (Baker's yeast).